The chain runs to 580 residues: MSITFNLKIAPFSGPGIQRSKETFPATEIQITASTKSTMTTKCSFNASTDFMGKLREKVGGKADKPPVVIHPVDISSNLCMIDTLQSLGVDRYFQSEINTLLEHTYRLWKEKKKNIIFKDVSCCAIAFRLLREKGYQVSSDKLAPFADYRIRDVATILELYRASQARLYEDEHTLEKLHDWSSNLLKQHLLNGSIPDHKLHKQVEYFLKNYHGILDRVAVRRSLDLYNINHHHRIPDVADGFPKEDFLEYSMQDFNICQAQQQEELHQLQRWYADCRLDTLNYGRDVVRIANFLTSAIFGEPEFSDARLAFAKHIILVTRIDDFFDHGGSREESYKILDLVQEWKEKPAEEYGSKEVEILFTAVYNTVNDLAEKAHIEQGRCVKPLLIKLWVEILTSFKKELDSWTEETALTLDEYLSSSWVSIGCRICILNSLQYLGIKLSEEMLSSQECTDLCRHVSSVDRLLNDVQTFKKERLENTINSVGLQLAAHKGERAMTEEDAMSKIKEMADYHRRKLMQIVYKEGTVFPRECKDVFLRVCRIGYYLYSSGDEFTSPQQMKEDMKSLVYQPVKIHPLEAINV.

Residues 1 to 32 (MSITFNLKIAPFSGPGIQRSKETFPATEIQIT) constitute a chloroplast transit peptide. Mg(2+) is bound by residues Asp-322, Asp-326, Asn-466, Thr-470, and Glu-474. A DDXXD motif motif is present at residues 322–326 (DDFFD).

The protein belongs to the terpene synthase family. Requires Mg(2+) as cofactor. As to expression, present in both leaves and flowers, with higher levels in leaves.

The protein resides in the plastid. It is found in the chloroplast. The catalysed reaction is peregrinol diphosphate = (13R)-9,13-epoxylabd-14-ene + diphosphate. It catalyses the reaction (+)-copalyl diphosphate = miltiradiene + diphosphate. The enzyme catalyses 8-hydroxycopalyl diphosphate = (13R)-manoyl oxide + diphosphate. It participates in secondary metabolite biosynthesis; terpenoid biosynthesis. Involved in the biosynthesis of labdane-type diterpenoid including marrubiin and other labdane-related furanoid diterpenoids with potential applications as anti-diabetics, analgesics or vasorelaxants. Terpene synthase the catalyzes the conversion of peregrinol diphosphate to 9,13(R)-epoxy-labd-14-ene, from (+)-copalyl diphosphate ((+)-CPP) to miltiradiene and from 8-hydroxycopalyl diphosphate (LPP, labda-13-en-8-ol diphosphate) to manoyl oxide. This Marrubium vulgare (White horehound) protein is 9,13-epoxylabda-14-ene synthase, chloroplastic.